We begin with the raw amino-acid sequence, 79 residues long: Orally active insecticidal peptide (79 aa).

The N-terminal stretch at 1–19 is a signal peptide; that stretch reads MRVLFIIAGLALLSVVCYT. A propeptide spanning residues 20–44 is cleaved from the precursor; it reads SEMKERSSFNEVLSEFFAADEPQER. Intrachain disulfides connect cysteine 46-cysteine 61, cysteine 53-cysteine 66, and cysteine 60-cysteine 73. Residue alanine 77 is modified to Alanine amide.

Belongs to the neurotoxin 03 (Tx2) family. 01 subfamily. Expressed by the venom gland.

The protein localises to the secreted. Functionally, probable ion channel inhibitor. Shows insecticidal activity when injected into mealworms. In Selenotypus plumipes (Australian featherleg tarantula), this protein is Orally active insecticidal peptide.